The sequence spans 375 residues: MNCVSRLKCLISKARSFARLGGESTLSQPPSLASAAFSSSAVMNGLETHNTRLCIVGSGPAAHTAAIYAARAELKPLLFEGWMANDIAPGGQLTTTTDVENFPGFPEGILGVELTDKFRKQSERFGTTIFTETVTKVDFSSKPFKLFTDSKAILADAVILATGAVAKRLSFVGSGEASGGFWNRGISACAVCDGAAPIFRNKPLAVIGGGDSAMEEANFLTKYGSKVYIIHRRDAFRASKIMQQRALSNPKIDVIWNSSVVEAYGDGERDVLGGLKVKNVVTGDVSDLKVSGLFFAIGHEPATKFLDGGVELDSDGYVVTKPGTTQTSVPGVFAAGDVQDKKYRQAITAAGTGCMAALDAEHYLQEIGSQQGKSD.

A mitochondrion-targeting transit peptide spans 1–37 (MNCVSRLKCLISKARSFARLGGESTLSQPPSLASAAF). FAD is bound by residues 58 to 61 (SGPA), 79 to 80 (FE), 87 to 92 (IAPGGQ), N101, V134, C192, D337, and 344 to 346 (RQA). C189 and C192 are disulfide-bonded.

Belongs to the class-II pyridine nucleotide-disulfide oxidoreductase family. As to quaternary structure, homodimer. Requires FAD as cofactor. As to expression, ubiquitous.

It localises to the cytoplasm. The protein localises to the mitochondrion. It carries out the reaction [thioredoxin]-dithiol + NADP(+) = [thioredoxin]-disulfide + NADPH + H(+). Functionally, NADPH-dependent thioredoxin-disulfide reductase that reduces thioredoxins O1, O2 and F3. This is Thioredoxin reductase 1, mitochondrial (NTR1) from Arabidopsis thaliana (Mouse-ear cress).